Reading from the N-terminus, the 158-residue chain is NKG2-F type II integral membrane protein (158 aa).

The segment covering 1 to 12 (MNKQRGTYSEVS) has biased composition (polar residues). The interval 1 to 25 (MNKQRGTYSEVSLAQDPKRQQRKLK) is disordered. At 1–74 (MNKQRGTYSE…LPPPEKLTAE (74 aa)) the chain is on the cytoplasmic side. A helical; Signal-anchor for type II membrane protein transmembrane segment spans residues 75–95 (VLGIICIVLMATVLKTIVLIP). Residues 96–158 (CIGVLEQNNF…VLRRTLICFL (63 aa)) lie on the Extracellular side of the membrane.

Can form disulfide-bonded heterodimer with CD94. Natural killer cells.

The protein resides in the membrane. May play a role as a receptor for the recognition of MHC class I HLA-E molecules by NK cells. The protein is NKG2-F type II integral membrane protein (KLRC4) of Homo sapiens (Human).